The chain runs to 98 residues: Large ribosomal subunit protein uL23 (98 aa).

This sequence belongs to the universal ribosomal protein uL23 family. Part of the 50S ribosomal subunit. Contacts protein L29, and trigger factor when it is bound to the ribosome.

Its function is as follows. One of the early assembly proteins it binds 23S rRNA. One of the proteins that surrounds the polypeptide exit tunnel on the outside of the ribosome. Forms the main docking site for trigger factor binding to the ribosome. The protein is Large ribosomal subunit protein uL23 of Frankia alni (strain DSM 45986 / CECT 9034 / ACN14a).